The chain runs to 46 residues: Lariatin (46 aa).

Residues 1–26 constitute a propeptide that is removed on maturation; it reads MTSQPSKKTYNAPSLVQRGKFARTTA. The segment at residues 27–34 is a cross-link (isoglutamyl glycine isopeptide (Gly-Glu)); sequence GSQLVYRE.

In terms of processing, the linear precursor LarA is probably cleaved by the putative peptidase LarD, generating linear 18-residue Lariatin-A or 20-residue Lariatin-B. These linear peptides are probably cross-linked by LarB. Finally, lariatins A and B may be exported by ABC transporter LarE.

In terms of biological role, peptide antibiotic with selective activity against Mycobacterium species (M.smegmatis, MIC=3.13 ug/ml and M.tuberculosis, MIC=0.39 ug/ml). it is plausible that the target of lariatins lies within the cell wall in mycobacteria. Peptide antibiotic with selective activity against Mycobacterium species (M.smegmatis, MIC=6.25 ug/ml). The polypeptide is Lariatin (Rhodococcus jostii).